We begin with the raw amino-acid sequence, 150 residues long: Putative solute carrier family 19 member 4 (150 aa).

Positions 118-137 (PSVREGACNEKSTENKKPQD) are disordered. A compositionally biased stretch (basic and acidic residues) spans 124-136 (ACNEKSTENKKPQ).

Belongs to the reduced folate carrier (RFC) transporter (TC 2.A.48) family.

The polypeptide is Putative solute carrier family 19 member 4 (Homo sapiens (Human)).